The following is a 147-amino-acid chain: Transcriptional regulator MraZ (147 aa).

SpoVT-AbrB domains lie at 6 to 48 (NFER…NSEE) and 77 to 120 (TVEV…SKAK).

Belongs to the MraZ family. In terms of assembly, forms oligomers.

It localises to the cytoplasm. The protein localises to the nucleoid. The protein is Transcriptional regulator MraZ of Mycoplasmopsis pulmonis (strain UAB CTIP) (Mycoplasma pulmonis).